The chain runs to 294 residues: Putative glucose-6-phosphate 1-epimerase (294 aa).

Substrate-binding residues include arginine 74 and arginine 99. The active site involves histidine 164. Position 208 (aspartate 208) interacts with substrate. Glutamate 267 is a catalytic residue.

Belongs to the glucose-6-phosphate 1-epimerase family. Monomer in solution.

The catalysed reaction is alpha-D-glucose 6-phosphate = beta-D-glucose 6-phosphate. Probably functions as a hexose-6-phosphate 1-epimerase. This is Putative glucose-6-phosphate 1-epimerase from Salmonella typhimurium (strain LT2 / SGSC1412 / ATCC 700720).